The chain runs to 333 residues: N-acetyl-gamma-glutamyl-phosphate reductase (333 aa).

Cys-145 is a catalytic residue.

This sequence belongs to the NAGSA dehydrogenase family. Type 1 subfamily.

It is found in the cytoplasm. The enzyme catalyses N-acetyl-L-glutamate 5-semialdehyde + phosphate + NADP(+) = N-acetyl-L-glutamyl 5-phosphate + NADPH + H(+). Its pathway is amino-acid biosynthesis; L-arginine biosynthesis; N(2)-acetyl-L-ornithine from L-glutamate: step 3/4. Functionally, catalyzes the NADPH-dependent reduction of N-acetyl-5-glutamyl phosphate to yield N-acetyl-L-glutamate 5-semialdehyde. The chain is N-acetyl-gamma-glutamyl-phosphate reductase from Salinispora tropica (strain ATCC BAA-916 / DSM 44818 / JCM 13857 / NBRC 105044 / CNB-440).